A 308-amino-acid polypeptide reads, in one-letter code: Ribosomal RNA small subunit methyltransferase H (308 aa).

S-adenosyl-L-methionine contacts are provided by residues 32 to 34 (GGH), D51, F78, D99, and Q106.

This sequence belongs to the methyltransferase superfamily. RsmH family.

Its subcellular location is the cytoplasm. It catalyses the reaction cytidine(1402) in 16S rRNA + S-adenosyl-L-methionine = N(4)-methylcytidine(1402) in 16S rRNA + S-adenosyl-L-homocysteine + H(+). Its function is as follows. Specifically methylates the N4 position of cytidine in position 1402 (C1402) of 16S rRNA. This chain is Ribosomal RNA small subunit methyltransferase H, found in Campylobacter curvus (strain 525.92).